The chain runs to 320 residues: Mitochondrial thiamine pyrophosphate carrier (320 aa).

Solcar repeat units follow at residues 13 to 106 (NTKF…LTEL), 116 to 202 (REFS…LKHL), and 214 to 309 (NENL…FCNV). Residues 19-39 (AVAGSVSGLVTRALISPFDVI) form a helical membrane-spanning segment. The residue at position 51 (Ser51) is a Phosphoserine. A run of 4 helical transmembrane segments spans residues 87–107 (ILSI…TELV), 122–142 (FVCG…VDVL), 173–193 (VFYK…GLQF), and 220–240 (LLCG…LDLF). Positions 241-246 (KKRLQV) match the Substrate recognition motif. Residues 293 to 313 (ALSTGFMFFSYEFFCNVFHCM) traverse the membrane as a helical segment.

This sequence belongs to the mitochondrial carrier (TC 2.A.29) family. Expressed in all tissues examined except for placenta. Highest levels in colon, kidney, lung, testis, spleen, and brain.

The protein localises to the mitochondrion membrane. It carries out the reaction thiamine phosphate(out) + thiamine diphosphate(in) = thiamine phosphate(in) + thiamine diphosphate(out). Mitochondrial transporter mediating uptake of thiamine diphosphate into mitochondria. It is not clear if the antiporter activity is affected by the membrane potential or by the proton electrochemical gradient. In Homo sapiens (Human), this protein is Mitochondrial thiamine pyrophosphate carrier.